A 37-amino-acid chain; its full sequence is Cytochrome b6-f complex subunit 5 (37 aa).

The chain crosses the membrane as a helical span at residues 5–25; that stretch reads LLSGIVLGLVPVTIAGLFVTA.

This sequence belongs to the PetG family. In terms of assembly, the 4 large subunits of the cytochrome b6-f complex are cytochrome b6, subunit IV (17 kDa polypeptide, PetD), cytochrome f and the Rieske protein, while the 4 small subunits are PetG, PetL, PetM and PetN. The complex functions as a dimer.

Its subcellular location is the plastid. The protein resides in the chloroplast thylakoid membrane. Its function is as follows. Component of the cytochrome b6-f complex, which mediates electron transfer between photosystem II (PSII) and photosystem I (PSI), cyclic electron flow around PSI, and state transitions. PetG is required for either the stability or assembly of the cytochrome b6-f complex. The polypeptide is Cytochrome b6-f complex subunit 5 (Chlorella vulgaris (Green alga)).